The chain runs to 704 residues: Polyribonucleotide nucleotidyltransferase (704 aa).

Mg(2+) is bound by residues aspartate 488 and aspartate 494. The KH domain maps to 555–614 (PRITTIKINPEKIRDVIGKGGATIRALTEETGTTIELDDDGTVKIASSNGEATKEAIRRI). Residues 624-692 (GTVYNGKVVR…RQGRVRLSMK (69 aa)) form the S1 motif domain.

It belongs to the polyribonucleotide nucleotidyltransferase family. As to quaternary structure, component of the RNA degradosome, which is a multiprotein complex involved in RNA processing and mRNA degradation. Requires Mg(2+) as cofactor.

The protein resides in the cytoplasm. The catalysed reaction is RNA(n+1) + phosphate = RNA(n) + a ribonucleoside 5'-diphosphate. Functionally, involved in mRNA degradation. Catalyzes the phosphorolysis of single-stranded polyribonucleotides processively in the 3'- to 5'-direction. The chain is Polyribonucleotide nucleotidyltransferase from Shewanella pealeana (strain ATCC 700345 / ANG-SQ1).